The sequence spans 210 residues: Large ribosomal subunit protein uL3 (210 aa).

Positions 119-151 are disordered; the sequence is FQGAIKRHGQSRGPMSHGSRYHRRPGSMGPVAP.

The protein belongs to the universal ribosomal protein uL3 family. As to quaternary structure, part of the 50S ribosomal subunit. Forms a cluster with proteins L14 and L19.

Its function is as follows. One of the primary rRNA binding proteins, it binds directly near the 3'-end of the 23S rRNA, where it nucleates assembly of the 50S subunit. The polypeptide is Large ribosomal subunit protein uL3 (Bacillus cytotoxicus (strain DSM 22905 / CIP 110041 / 391-98 / NVH 391-98)).